The following is a 398-amino-acid chain: MKFLQTSLIAAALPAALVSGRFVIENEGDNVQLDEPAKYLIELSPGETQWVTEEDKWDLRRNGQNFMDITDTQELGTLRAWTQSQASVAFPDKCVKQKEVGELAGHLTKDGMRRNLEKLTSFHTRYYKSDYGRQSSEWVLERINGIIKDAGAEDTVTAEHFGHSWPQSSVIARIPGKTNTTVIIGAHQDSINLWLPSILGAPGADDDGSGTVTIMEVFHTLLKAKDVVGGSAPNTVEFHWYSAEEGGLLGSQAIFQSYEKEGRDVKAMLQQDMTGFVQGTEDAGKPESVGVITDFVHPGLTAFIKKVIEEYCSIPWVETKCGYACSDHASASKAGYPSAFVIESAFENSDQHIHGTDDLIKYLSFDHMLEHAKMTLGLVYELAYHDFSSKAVEEPSEL.

A signal peptide spans 1 to 20 (MKFLQTSLIAAALPAALVSG). A propeptide spanning residues 21-87 (RFVIENEGDN…LRAWTQSQAS (67 aa)) is cleaved from the precursor. N-linked (GlcNAc...) asparagine glycosylation is present at asparagine 179. Histidine 187, aspartate 206, glutamate 245, and aspartate 272 together coordinate Zn(2+). A disulfide bridge links cysteine 321 with cysteine 325. Histidine 354 serves as a coordination point for Zn(2+).

Belongs to the peptidase M28 family. M28E subfamily. As to quaternary structure, monomer. The cofactor is Zn(2+).

The protein resides in the secreted. In terms of biological role, extracellular aminopeptidase that allows assimilation of proteinaceous substrates. In Trichoderma harzianum (Hypocrea lixii), this protein is Leucine aminopeptidase 1 (lap1).